Reading from the N-terminus, the 498-residue chain is ATP synthase subunit alpha 1 (498 aa).

This sequence belongs to the ATPase alpha/beta chains family. F-type ATPases have 2 components, CF(1) - the catalytic core - and CF(0) - the membrane proton channel. CF(1) has five subunits: alpha(3), beta(3), gamma(1), delta(1), epsilon(1). CF(0) has three main subunits: a(1), b(2) and c(9-12). The alpha and beta chains form an alternating ring which encloses part of the gamma chain. CF(1) is attached to CF(0) by a central stalk formed by the gamma and epsilon chains, while a peripheral stalk is formed by the delta and b chains.

Its subcellular location is the cell membrane. It catalyses the reaction ATP + H2O + 4 H(+)(in) = ADP + phosphate + 5 H(+)(out). Its function is as follows. Produces ATP from ADP in the presence of a proton gradient across the membrane. The alpha chain is a regulatory subunit. The sequence is that of ATP synthase subunit alpha 1 from Listeria monocytogenes serovar 1/2a (strain ATCC BAA-679 / EGD-e).